Here is a 431-residue protein sequence, read N- to C-terminus: tRNA(Ile)-lysidine synthase (431 aa).

25–30 (SGGLDS) serves as a coordination point for ATP.

This sequence belongs to the tRNA(Ile)-lysidine synthase family.

It localises to the cytoplasm. It catalyses the reaction cytidine(34) in tRNA(Ile2) + L-lysine + ATP = lysidine(34) in tRNA(Ile2) + AMP + diphosphate + H(+). In terms of biological role, ligates lysine onto the cytidine present at position 34 of the AUA codon-specific tRNA(Ile) that contains the anticodon CAU, in an ATP-dependent manner. Cytidine is converted to lysidine, thus changing the amino acid specificity of the tRNA from methionine to isoleucine. The sequence is that of tRNA(Ile)-lysidine synthase from Legionella pneumophila (strain Lens).